We begin with the raw amino-acid sequence, 558 residues long: Urocanate hydratase (558 aa).

Residues Gly-54 to Gly-55, Gln-132, Gly-178 to Gly-180, Glu-198, Asn-244 to Ala-245, Gln-265 to His-269, Tyr-275 to Leu-276, and Tyr-324 each bind NAD(+). Cys-412 is an active-site residue. Residue Gly-494 participates in NAD(+) binding.

Belongs to the urocanase family. Requires NAD(+) as cofactor.

The protein resides in the cytoplasm. It carries out the reaction 4-imidazolone-5-propanoate = trans-urocanate + H2O. Its pathway is amino-acid degradation; L-histidine degradation into L-glutamate; N-formimidoyl-L-glutamate from L-histidine: step 2/3. Its function is as follows. Catalyzes the conversion of urocanate to 4-imidazolone-5-propionate. The polypeptide is Urocanate hydratase (Acinetobacter baumannii (strain AB307-0294)).